Here is a 463-residue protein sequence, read N- to C-terminus: Digalactosyldiacylglycerol synthase 2, chloroplastic (463 aa).

The N-terminal stretch at 1-22 is a signal peptide; that stretch reads MGKKQHIAIFTTASLPWLTGTA.

It belongs to the glycosyltransferase group 1 family. Glycosyltransferase 4 subfamily. In terms of tissue distribution, high expression in nodules infected cells, and low in nodule and root vascular tissue.

It is found in the plastid. The protein localises to the chloroplast outer membrane. Its subcellular location is the plastid outer membrane. It carries out the reaction a 1,2-diacyl-3-O-(beta-D-galactosyl)-sn-glycerol + UDP-alpha-D-galactose = a 1,2-diacyl-3-O-[alpha-D-galactosyl-(1-&gt;6)-beta-D-galactosyl]-sn-glycerol + UDP + H(+). Involved in the synthesis of diacylglycerol galactolipids that are specifically found in thylakoid and in nodule peribacteroid membranes. Specific for alpha-glycosidic linkages. This Lotus japonicus (Lotus corniculatus var. japonicus) protein is Digalactosyldiacylglycerol synthase 2, chloroplastic.